The chain runs to 354 residues: Methylthioribose-1-phosphate isomerase (354 aa).

Substrate contacts are provided by residues 58–60 (RGA), Arg-101, and Gln-204. Catalysis depends on Asp-245, which acts as the Proton donor. 255 to 256 (NK) lines the substrate pocket.

It belongs to the eIF-2B alpha/beta/delta subunits family. MtnA subfamily.

It carries out the reaction 5-(methylsulfanyl)-alpha-D-ribose 1-phosphate = 5-(methylsulfanyl)-D-ribulose 1-phosphate. It functions in the pathway amino-acid biosynthesis; L-methionine biosynthesis via salvage pathway; L-methionine from S-methyl-5-thio-alpha-D-ribose 1-phosphate: step 1/6. In terms of biological role, catalyzes the interconversion of methylthioribose-1-phosphate (MTR-1-P) into methylthioribulose-1-phosphate (MTRu-1-P). The protein is Methylthioribose-1-phosphate isomerase of Xylella fastidiosa (strain 9a5c).